The primary structure comprises 141 residues: Protein stum homolog (141 aa).

At S26 the chain carries Phosphoserine. Helical transmembrane passes span 51–71 (FPVA…GTFV) and 87–107 (RHVC…VLTA).

This sequence belongs to the SPEC3 family. Stum subfamily.

The protein resides in the membrane. The protein is Protein stum homolog of Mus musculus (Mouse).